The primary structure comprises 427 residues: Steroid C26-monooxygenase (427 aa).

Residue Cys-360 participates in heme binding.

The protein belongs to the cytochrome P450 family. The cofactor is heme.

The enzyme catalyses cholest-4-en-3-one + 6 reduced [2Fe-2S]-[ferredoxin] + 3 O2 + 5 H(+) = (25S)-3-oxocholest-4-en-26-oate + 6 oxidized [2Fe-2S]-[ferredoxin] + 4 H2O. It participates in steroid metabolism; cholesterol degradation. Its function is as follows. Involved in the utilization of cholesterol as the sole carbon and energy source by degrading the side chain. Primarily catalyzes the sequential oxidation of the terminal methyl of cholest-4-en-3-one into (25S)-26-hydroxycholest-4-en-3-one (alcohol), (25S)-26-oxocholest-4-en-3-one (aldehyde), to finally yield the carboxylic acid (25S)-3-oxocholest-4-en-26-oate. Also able to sequentially oxidize cholesterol itself, not only cholest-4-en-3-one. This chain is Steroid C26-monooxygenase, found in Mycolicibacterium smegmatis (strain ATCC 700084 / mc(2)155) (Mycobacterium smegmatis).